The sequence spans 157 residues: SsrA-binding protein (157 aa).

The protein belongs to the SmpB family.

It localises to the cytoplasm. Its function is as follows. Required for rescue of stalled ribosomes mediated by trans-translation. Binds to transfer-messenger RNA (tmRNA), required for stable association of tmRNA with ribosomes. tmRNA and SmpB together mimic tRNA shape, replacing the anticodon stem-loop with SmpB. tmRNA is encoded by the ssrA gene; the 2 termini fold to resemble tRNA(Ala) and it encodes a 'tag peptide', a short internal open reading frame. During trans-translation Ala-aminoacylated tmRNA acts like a tRNA, entering the A-site of stalled ribosomes, displacing the stalled mRNA. The ribosome then switches to translate the ORF on the tmRNA; the nascent peptide is terminated with the 'tag peptide' encoded by the tmRNA and targeted for degradation. The ribosome is freed to recommence translation, which seems to be the essential function of trans-translation. The protein is SsrA-binding protein of Chromohalobacter salexigens (strain ATCC BAA-138 / DSM 3043 / CIP 106854 / NCIMB 13768 / 1H11).